Here is a 226-residue protein sequence, read N- to C-terminus: Lipoprotein-releasing system ATP-binding protein LolD (226 aa).

The ABC transporter domain maps to 6–226; the sequence is LSVEQVSKSF…QLQQGSLIRI (221 aa). 42–49 is a binding site for ATP; sequence GESGCGKS.

This sequence belongs to the ABC transporter superfamily. Lipoprotein translocase (TC 3.A.1.125) family. As to quaternary structure, the complex is composed of two ATP-binding proteins (LolD) and two transmembrane proteins (LolC and LolE).

The protein resides in the cell inner membrane. Part of the ABC transporter complex LolCDE involved in the translocation of mature outer membrane-directed lipoproteins, from the inner membrane to the periplasmic chaperone, LolA. Responsible for the formation of the LolA-lipoprotein complex in an ATP-dependent manner. The polypeptide is Lipoprotein-releasing system ATP-binding protein LolD (Treponema pallidum (strain Nichols)).